The chain runs to 575 residues: Urease subunit alpha (575 aa).

The Urease domain maps to 137-575 (GGIDCHIHFI…LPMTQRYFLF (439 aa)). H142, H144, and K225 together coordinate Ni(2+). An N6-carboxylysine modification is found at K225. Residue H227 participates in substrate binding. H254 and H280 together coordinate Ni(2+). The active-site Proton donor is H328. D368 contributes to the Ni(2+) binding site.

This sequence belongs to the metallo-dependent hydrolases superfamily. Urease alpha subunit family. In terms of assembly, heterotrimer of UreA (gamma), UreB (beta) and UreC (alpha) subunits. Three heterotrimers associate to form the active enzyme. Ni cation is required as a cofactor. In terms of processing, carboxylation allows a single lysine to coordinate two nickel ions.

It localises to the cytoplasm. It carries out the reaction urea + 2 H2O + H(+) = hydrogencarbonate + 2 NH4(+). Its pathway is nitrogen metabolism; urea degradation; CO(2) and NH(3) from urea (urease route): step 1/1. The chain is Urease subunit alpha from Methylibium petroleiphilum (strain ATCC BAA-1232 / LMG 22953 / PM1).